The following is a 321-amino-acid chain: Probable pectate lyase A (321 aa).

Positions 1 to 20 are cleaved as a signal peptide; sequence MANFKLFLALAACLSGQALA. A glycan (N-linked (GlcNAc...) asparagine) is linked at Asn93. Ca(2+) contacts are provided by Asp134, Asp163, and Asp167. Arg220 is a catalytic residue.

Belongs to the polysaccharide lyase 1 family. Requires Ca(2+) as cofactor.

It is found in the secreted. The enzyme catalyses Eliminative cleavage of (1-&gt;4)-alpha-D-galacturonan to give oligosaccharides with 4-deoxy-alpha-D-galact-4-enuronosyl groups at their non-reducing ends.. Functionally, pectinolytic enzyme consist of four classes of enzymes: pectin lyase, polygalacturonase, pectin methylesterase and rhamnogalacturonase. Among pectinolytic enzymes, pectin lyase is the most important in depolymerization of pectin, since it cleaves internal glycosidic bonds of highly methylated pectins. Favors pectate, the anion, over pectin, the methyl ester. The polypeptide is Probable pectate lyase A (plyA) (Aspergillus flavus (strain ATCC 200026 / FGSC A1120 / IAM 13836 / NRRL 3357 / JCM 12722 / SRRC 167)).